An 808-amino-acid polypeptide reads, in one-letter code: Aminotransferase ALT4 (808 aa).

This sequence belongs to the class-II pyridoxal-phosphate-dependent aminotransferase family. BioF subfamily. It depends on pyridoxal 5'-phosphate as a cofactor.

It functions in the pathway mycotoxin biosynthesis. Functionally, aminotransferase; part of the gene cluster that mediates the biosynthesis of the host-selective toxins (HSTs) AAL-toxins, sphinganine-analog mycotoxins responsible for Alternaria stem canker on tomato by the tomato pathotype. The biosynthesis starts with the polyketide synthase ALT1-catalyzed C-16 carbon chain assembly from one starter acetyl-CoA unit with malonyl-CoA extender units. ALT1 also selectively transfers methyl groups at the first and the third cycle of chain elongation for AAL toxin. The C-16 polyketide chain is released from the enzyme by a nucleophilic attack of a carbanion, which is derived from R-carbon of glycin by decarboxylation, on the carbonyl carbon of polyketide acyl chain. This step is probably catalyzed by a pyridoxal 5'-phosphate-dependent aminoacyl transferase ALT4. The respective functions of the other enzymes encoded by the cluster have still to be elucidated. The sphingosine N-acyltransferase-like protein ALT7 seems not to act as a resistance/self-tolerance factor against the toxin in the toxin biosynthetic gene cluster, contrary to what is expected. The polypeptide is Aminotransferase ALT4 (Alternaria alternata (Alternaria rot fungus)).